The sequence spans 200 residues: Small ribosomal subunit protein uS4 (200 aa).

The disordered stretch occupies residues 22–42 (TGKELEKRPYAPGPHGPNQRK). Positions 92-152 (ARLDNLVYRM…EKSNNLVVVK (61 aa)) constitute an S4 RNA-binding domain.

This sequence belongs to the universal ribosomal protein uS4 family. As to quaternary structure, part of the 30S ribosomal subunit. Contacts protein S5. The interaction surface between S4 and S5 is involved in control of translational fidelity.

In terms of biological role, one of the primary rRNA binding proteins, it binds directly to 16S rRNA where it nucleates assembly of the body of the 30S subunit. With S5 and S12 plays an important role in translational accuracy. This Bacillus cereus (strain Q1) protein is Small ribosomal subunit protein uS4.